We begin with the raw amino-acid sequence, 455 residues long: MASKITGKGSFRGVPFLIEEEQGLDGGRRIVSHEYPLRDEGLTEDMGKRLRRYQVSCLVIGDDHLAQAEKLIDALEASGAGTLKHPYFGTIEVRVDDYRAKNSTNHQRVTRFDINFLPAIEKNAPEIAEDTAYSVLSEYQATLNSLSDEFAEMVQDVSGFIESMVDNPLFRLADTTAAFIENIFEGVANTVSGLTEVKDKALSIKNRLSNLLLTPKVLAYELQQLTRLNVRSAVNSQRQFVQHIVITDSISSALGDLTATKNEISKSTLDEMVTAKTNNVAETEILARQFKNLHEQEIFDALMNKTTFLLKRLVLSTLAVEYGKAISDAVTESVAQKTVTEETIATLIESKTDVQRYIAEVDEQLEAVILDNADAEQWTSYAALEQYRLTLMRDLQIRGERLANAIEVKLNDTYPAILLEYRHTGNSKTWKRLALRNGISHPLFCLGGTTLEVLQ.

Positions 368 to 387 form a DNA-binding region, H-T-H motif; sequence VILDNADAEQWTSYAALEQY.

The protein to phage Mu protein N.

This chain is Mu-like prophage FluMu DNA circularization protein, found in Haemophilus influenzae (strain ATCC 51907 / DSM 11121 / KW20 / Rd).